A 646-amino-acid chain; its full sequence is Cysteine-rich receptor-like protein kinase 37 (646 aa).

The N-terminal stretch at 1-26 is a signal peptide; the sequence is MGKSCVVTSSFSLLLLFLQTLKYVHA. Gnk2-homologous domains follow at residues 27-132 and 142-252; these read GFIC…NHST and TINP…LYPY. Topologically, residues 27-287 are extracellular; sequence GFICYGDFFN…RDEKSFQGSN (261 aa). N-linked (GlcNAc...) asparagine glycans are attached at residues Asn-62, Asn-129, Asn-169, and Asn-180. A helical transmembrane segment spans residues 288–308; that stretch reads IAIIVVPSVINLIIFVVLIFS. The Cytoplasmic segment spans residues 309-646; it reads WKRKQSHTII…LTRPSLSLGH (338 aa). Positions 345 to 626 constitute a Protein kinase domain; the sequence is FSLENKLGQG…LFWLERHATI (282 aa). ATP contacts are provided by residues 351-359 and Lys-373; that span reads LGQGGFGSV. Position 418 is a phosphotyrosine (Tyr-418). The Proton acceptor role is filled by Asp-470. At Ser-474 the chain carries Phosphoserine. Thr-510 bears the Phosphothreonine mark. The residue at position 518 (Tyr-518) is a Phosphotyrosine.

It belongs to the protein kinase superfamily. Ser/Thr protein kinase family. CRK subfamily.

The protein localises to the membrane. The catalysed reaction is L-seryl-[protein] + ATP = O-phospho-L-seryl-[protein] + ADP + H(+). It carries out the reaction L-threonyl-[protein] + ATP = O-phospho-L-threonyl-[protein] + ADP + H(+). In Arabidopsis thaliana (Mouse-ear cress), this protein is Cysteine-rich receptor-like protein kinase 37 (CRK37).